Consider the following 347-residue polypeptide: NADH-ubiquinone oxidoreductase chain 2 (347 aa).

11 consecutive transmembrane segments (helical) span residues 3–23, 25–45, 66–86, 96–116, 122–142, 149–169, 178–198, 201–221, 237–257, 274–294, and 323–343; these read PPILIIIMATIMTGTMIVMLS, HWLLIWIGFEMNMLAVIPVLM, ASMLLMMGVTINLLYSGQWVV, IMMTIALTMKLGLSPFHFWVP, ITLTSGMILLTWQKIAPMSVL, INTNLLMLVALVSVLVGGWGG, IMAYSSIAHMGWMAAIIIYNP, MILNLVLYILMTLSTFMLFML, FPLITSIILILMLSLGGLPPL, NMIIIPTLMAITALLNLYFYL, and TILLPPLIITSTMLLPLTPML.

Belongs to the complex I subunit 2 family. Core subunit of respiratory chain NADH dehydrogenase (Complex I) which is composed of 45 different subunits. Interacts with TMEM242.

The protein resides in the mitochondrion inner membrane. It catalyses the reaction a ubiquinone + NADH + 5 H(+)(in) = a ubiquinol + NAD(+) + 4 H(+)(out). Its function is as follows. Core subunit of the mitochondrial membrane respiratory chain NADH dehydrogenase (Complex I) which catalyzes electron transfer from NADH through the respiratory chain, using ubiquinone as an electron acceptor. Essential for the catalytic activity and assembly of complex I. This Canis rufus (Red wolf) protein is NADH-ubiquinone oxidoreductase chain 2.